Consider the following 69-residue polypeptide: Putative F-box protein At2g33705 (69 aa).

An F-box domain is found at 14–59 (GVNLEQIPYDLVLEILLKLSAKSIARFRCVSKLWDSTFRSRYFTEL).

This chain is Putative F-box protein At2g33705, found in Arabidopsis thaliana (Mouse-ear cress).